A 250-amino-acid chain; its full sequence is Menaquinol:cytochrome c reductase cytochrome c subunit (250 aa).

A run of 3 helical transmembrane segments spans residues 46-62 (WLVG…LTVA), 104-124 (VIGA…APFL), and 137-157 (VATG…WESV). Residues 178 to 250 (DTNAEGYKIA…LQKMANSSPA (73 aa)) enclose the Cytochrome c domain. Residues C192, C195, and H196 each contribute to the heme c site. Residues 229–250 (MPGGIFKGTDEELQKMANSSPA) are disordered.

Belongs to the cytochrome b family. As to quaternary structure, the main subunits of the menaquinol:cytochrome c complex are a Rieske-type iron-sulfur protein (QcrA), a cytochrome b (QcrB) and a cytochrome c (QcrC). Heme c is required as a cofactor.

The protein localises to the cell membrane. Functionally, component of the menaquinol:cytochrome c reductase complex. The sequence is that of Menaquinol:cytochrome c reductase cytochrome c subunit (qcrC) from Geobacillus thermodenitrificans.